Reading from the N-terminus, the 247-residue chain is Golgi-associated RAB2 interactor protein 5A (247 aa).

Residues 1–16 show a composition bias toward pro residues; the sequence is MGPPLWPDLQEPPPPG. Disordered regions lie at residues 1-22 and 60-92; these read MGPP…SQIR and GDIA…PTGR.

Belongs to the GARIN family. Interacts (via N-terminus) with RAB2B (in GTP-bound form).

Its subcellular location is the golgi apparatus. In terms of biological role, RAB2B effector protein which promotes cytosolic DNA-induced innate immune responses. Regulates IFN responses against DNA viruses by regulating the CGAS-STING signaling axis. This Homo sapiens (Human) protein is Golgi-associated RAB2 interactor protein 5A.